The primary structure comprises 206 residues: BAG family molecular chaperone regulator 1B (206 aa).

One can recognise a BAG domain in the interval 122 to 202 (IEAYIDELQQ…QYLSKLDSTK (81 aa)). The residue at position 144 (Ser144) is a Phosphoserine.

In terms of assembly, binds to the ATPase domain of HSP70/HSC chaperones.

Its function is as follows. Inhibits the chaperone activity of HSP70/HSC70 by promoting substrate release. The chain is BAG family molecular chaperone regulator 1B (bag102) from Schizosaccharomyces pombe (strain 972 / ATCC 24843) (Fission yeast).